The primary structure comprises 337 residues: tRNA N6-adenosine threonylcarbamoyltransferase (337 aa).

2 residues coordinate Fe cation: His-111 and His-115. Substrate contacts are provided by residues 134–138, Asp-167, Gly-180, and Asn-272; that span reads LVSGG. Position 300 (Asp-300) interacts with Fe cation.

This sequence belongs to the KAE1 / TsaD family. Requires Fe(2+) as cofactor.

The protein localises to the cytoplasm. It catalyses the reaction L-threonylcarbamoyladenylate + adenosine(37) in tRNA = N(6)-L-threonylcarbamoyladenosine(37) in tRNA + AMP + H(+). Functionally, required for the formation of a threonylcarbamoyl group on adenosine at position 37 (t(6)A37) in tRNAs that read codons beginning with adenine. Is involved in the transfer of the threonylcarbamoyl moiety of threonylcarbamoyl-AMP (TC-AMP) to the N6 group of A37, together with TsaE and TsaB. TsaD likely plays a direct catalytic role in this reaction. This is tRNA N6-adenosine threonylcarbamoyltransferase from Enterobacter sp. (strain 638).